We begin with the raw amino-acid sequence, 84 residues long: Large ribosomal subunit protein bL27 (84 aa).

Belongs to the bacterial ribosomal protein bL27 family.

The protein is Large ribosomal subunit protein bL27 of Salinispora tropica (strain ATCC BAA-916 / DSM 44818 / JCM 13857 / NBRC 105044 / CNB-440).